A 130-amino-acid polypeptide reads, in one-letter code: Lysozyme C (130 aa).

The C-type lysozyme domain occupies 2–130 (KVYGRCELAA…VNVWIRGCRL (129 aa)). Disulfide bonds link Cys-7/Cys-128, Cys-31/Cys-116, Cys-65/Cys-81, and Cys-77/Cys-95. Residues Glu-36 and Asp-53 contribute to the active site.

This sequence belongs to the glycosyl hydrolase 22 family. Monomer.

The protein localises to the secreted. It carries out the reaction Hydrolysis of (1-&gt;4)-beta-linkages between N-acetylmuramic acid and N-acetyl-D-glucosamine residues in a peptidoglycan and between N-acetyl-D-glucosamine residues in chitodextrins.. Functionally, lysozymes have primarily a bacteriolytic function; those in tissues and body fluids are associated with the monocyte-macrophage system and enhance the activity of immunoagents. The polypeptide is Lysozyme C (LYZ) (Phasianus versicolor (Green pheasant)).